Consider the following 2399-residue polypeptide: Norsolorinic acid synthase (2399 aa).

The interval 10-247 (LVFGDQTYDF…RQIPIYVPAH (238 aa)) is starter unit:ACP transacylase (SAT) domain. Residues 372 to 805 (KSKLAIVSMS…GGNTALLIED (434 aa)) enclose the Ketosynthase family 3 (KS3) domain. Catalysis depends on for beta-ketoacyl synthase activity residues Cys544, His679, and His722. Residues 905-1192 (FAFTGQGSQY…LCGMIKNILG (288 aa)) are malonyl-CoA:ACP transacylase (MAT) domain. Catalysis depends on Ser995, which acts as the For acyl/malonyl transferase activity. Residues 1307–1327 (VQEAPAAKTETKKMSKLDPTK) are disordered. A compositionally biased stretch (basic and acidic residues) spans 1315 to 1327 (TETKKMSKLDPTK). Residues 1340-1483 (HKVIEEKTEP…CTVRFTTDSQ (144 aa)) are N-terminal hotdog fold. The PKS/mFAS DH domain maps to 1340-1658 (HKVIEEKTEP…LRSVPRKALR (319 aa)). The tract at residues 1353–1658 (QFTVETDISR…LRSVPRKALR (306 aa)) is product template (PT) domain. His1372 (proton acceptor; for dehydratase activity) is an active-site residue. The tract at residues 1510 to 1658 (LTHYNTKSGY…LRSVPRKALR (149 aa)) is C-terminal hotdog fold. The active-site Proton donor; for dehydratase activity is Asp1570. The interval 1665–1734 (MDKGIRQRGG…AALKASVPKA (70 aa)) is disordered. Positions 1677–1698 (GAAKGAVAAPAPAKKMVEPVKA) are enriched in low complexity. Pro residues predominate over residues 1708–1723 (AAPPSPSKAAPPPAPK). Positions 1724 to 1734 (PAALKASVPKA) are enriched in low complexity. 3 Carrier domains span residues 1733–1812 (KADP…AGAA), 1877–1953 (SKVF…GGSG), and 2020–2099 (VART…TGSS). O-(pantetheine 4'-phosphoryl)serine occurs at positions 1770, 1911, and 2057. Residues 2098-2115 (SSADSDSSSVASNPADPA) are compositionally biased toward low complexity. The interval 2098-2149 (SSADSDSSSVASNPADPAATPPRSESSDTEPDDEAPSKPKSGPGSTDSCRST) is disordered. Positions 2140-2149 (PGSTDSCRST) are enriched in polar residues. Residues 2164–2393 (TLFLLPDGGG…KARVNYVSDL (230 aa)) form a thioesterase/Claisen cyclase (TE/CLC) domain region. Ser2234 acts as the For thioesterase activity in catalysis.

Pantetheine 4'-phosphate serves as cofactor.

The enzyme catalyses hexanoyl-[ACP] + 7 malonyl-CoA + 6 H(+) = noranthrone + holo-[ACP] + 7 CO2 + 7 CoA + 2 H2O. Its pathway is mycotoxin biosynthesis. Functionally, polyketide synthase; part of the fragmented gene cluster that mediates the biosynthesis of dothistromin (DOTH), a polyketide toxin very similar in structure to the aflatoxin precursor, versicolorin B. The first step of the pathway is the conversion of acetate to norsolorinic acid (NOR) and requires the fatty acid synthase subunits hexA and hexB, as well as the polyketide synthase pksA. PksA combines a hexanoyl starter unit and 7 malonyl-CoA extender units to synthesize the precursor NOR. The hexanoyl starter unit is provided to the acyl-carrier protein (ACP) domain by the fungal fatty acid synthase hexA/hexB. The second step is the conversion of NOR to averantin (AVN) and requires the norsolorinic acid ketoreductase nor1, which catalyzes the dehydration of norsolorinic acid to form (1'S)-averantin. The cytochrome P450 monooxygenase avnA then catalyzes the hydroxylation of AVN to 5'hydroxyaverantin (HAVN). The next step is performed by adhA that transforms HAVN to averufin (AVF). Averufin might then be converted to hydroxyversicolorone by cypX and avfA. Hydroxyversicolorone is further converted versiconal hemiacetal acetate (VHA) by moxY. VHA is then the substrate for the versiconal hemiacetal acetate esterase est1 to yield versiconal (VAL). Versicolorin B synthase vbsA then converts VAL to versicolorin B (VERB) by closing the bisfuran ring. Then, the activity of the versicolorin B desaturase verB leads to versicolorin A (VERA). DotB, a predicted chloroperoxidase, may perform epoxidation of the A-ring of VERA. Alternatively, a cytochrome P450, such as cypX or avnA could catalyze this step. It is also possible that another, uncharacterized, cytochrome P450 enzyme is responsible for this step. Opening of the epoxide could potentially be achieved by the epoxide hydrolase epoA. However, epoA seems not to be required for DOTH biosynthesis, but other epoxide hydrolases may have the ability to complement this hydrolysis. Alternatively, opening of the epoxide ring could be achieved non-enzymatically. The next step is the deoxygenation of ring A to yield the 5,8-dihydroxyanthraquinone which is most likely catalyzed by the NADPH dehydrogenase encoded by ver1. The last stages of DOTH biosynthesis are proposed to involve hydroxylation of the bisfuran. OrdB and norB might have oxidative roles here. An alternative possibility is that cytochrome P450 monoogenases such as avnA and cypX might perform these steps in addition to previously proposed steps. This is Norsolorinic acid synthase from Dothistroma septosporum (Red band needle blight fungus).